A 146-amino-acid chain; its full sequence is uncharacterized protein (146 aa).

The segment at 87–121 (SRSHHSTAKSAKSALSSDSGDGSDPDPEPETFPSA) is disordered. The span at 94 to 106 (AKSAKSALSSDSG) shows a compositional bias: low complexity.

This is an uncharacterized protein from Escherichia coli (strain K12).